Reading from the N-terminus, the 416-residue chain is Phosphoribosylamine--glycine ligase (416 aa).

An ATP-grasp domain is found at K107–D313. L133–S194 contributes to the ATP binding site. The Mg(2+) site is built by E283 and N285.

This sequence belongs to the GARS family. Requires Mg(2+) as cofactor. The cofactor is Mn(2+).

It carries out the reaction 5-phospho-beta-D-ribosylamine + glycine + ATP = N(1)-(5-phospho-beta-D-ribosyl)glycinamide + ADP + phosphate + H(+). Its pathway is purine metabolism; IMP biosynthesis via de novo pathway; N(1)-(5-phospho-D-ribosyl)glycinamide from 5-phospho-alpha-D-ribose 1-diphosphate: step 2/2. The protein is Phosphoribosylamine--glycine ligase of Clostridium acetobutylicum (strain ATCC 824 / DSM 792 / JCM 1419 / IAM 19013 / LMG 5710 / NBRC 13948 / NRRL B-527 / VKM B-1787 / 2291 / W).